The primary structure comprises 209 residues: Uracil phosphoribosyltransferase (209 aa).

5-phospho-alpha-D-ribose 1-diphosphate contacts are provided by residues Arg79, Arg104, and Asp131–Ser139. Uracil is bound by residues Ile194 and Gly199–Ala201. 5-phospho-alpha-D-ribose 1-diphosphate is bound at residue Asp200.

This sequence belongs to the UPRTase family. It depends on Mg(2+) as a cofactor.

The enzyme catalyses UMP + diphosphate = 5-phospho-alpha-D-ribose 1-diphosphate + uracil. Its pathway is pyrimidine metabolism; UMP biosynthesis via salvage pathway; UMP from uracil: step 1/1. With respect to regulation, allosterically activated by GTP. In terms of biological role, catalyzes the conversion of uracil and 5-phospho-alpha-D-ribose 1-diphosphate (PRPP) to UMP and diphosphate. The chain is Uracil phosphoribosyltransferase from Thermotoga petrophila (strain ATCC BAA-488 / DSM 13995 / JCM 10881 / RKU-1).